The chain runs to 483 residues: Ero1-like protein (483 aa).

Positions 1-29 are cleaved as a signal peptide; the sequence is MTTRTVQRNLWASAAVVLVLLLLWTDTTG. 6 disulfides stabilise this stretch: Cys44-Cys57, Cys46-Cys55, Cys94-Cys402, Cys103-Cys108, Cys227-Cys251, and Cys405-Cys408. Residues Arg206, Thr208, and Trp219 each contribute to the FAD site. The N-linked (GlcNAc...) asparagine glycan is linked to Asn232. 3 residues coordinate FAD: Ser262, His265, and Arg301. Asn395 carries N-linked (GlcNAc...) asparagine glycosylation.

The protein belongs to the EROs family. May function both as a monomer and a homodimer. It depends on FAD as a cofactor.

It localises to the endoplasmic reticulum membrane. In terms of biological role, oxidoreductase involved in disulfide bond formation in the endoplasmic reticulum. Efficiently reoxidizes pdi-1, the enzyme catalyzing protein disulfide formation, in order to allow pdi-1 to sustain additional rounds of disulfide formation. Following pdi reoxidation, passes its electrons to molecular oxygen via FAD, leading to the production of reactive oxygen species (ROS) in the cell. The protein is Ero1-like protein (Ero1L) of Drosophila melanogaster (Fruit fly).